We begin with the raw amino-acid sequence, 1141 residues long: Serine-aspartate repeat-containing protein E (1141 aa).

The signal sequence occupies residues M1–A52. Residues F23–S34 carry the YSIRK-G/S signaling motif motif. The interval A53 to K601 is ligand binding A region. The tract at residues E54–P248 is disordered. The segment covering A61 to V75 has biased composition (basic and acidic residues). Positions E77 to N90 are enriched in low complexity. The span at I92–S108 shows a compositional bias: basic and acidic residues. The segment covering T109–T126 has biased composition (low complexity). Basic and acidic residues predominate over residues N130–T145. Over residues N159 to T207 the composition is skewed to polar residues. A compositionally biased stretch (basic and acidic residues) spans S216 to T241. CNA-B domains follow at residues L602–P714, K715–P824, and K825–T935. A disordered region spans residues V899–A1117. 2 stretches are compositionally biased toward acidic residues: residues T903 to E913 and Y930 to S1080. An LPXTG sorting signal motif is present at residues L1104 to G1108. T1107 carries the post-translational modification Pentaglycyl murein peptidoglycan amidated threonine. Residues G1108 to K1141 constitute a propeptide, removed by sortase.

It belongs to the serine-aspartate repeat-containing protein (SDr) family. As to quaternary structure, interacts with host complement factor H/CFAH (via C-terminus). Interacts with host complement regulator C4BPA.

Its subcellular location is the secreted. The protein localises to the cell wall. Functionally, cell surface-associated calcium-binding protein which plays an important role in adhesion and pathogenesis. Contributes to the resistance to killing by innate immune components in blood and thus attenuates bacterial clearance by interacting with host complement factor H/CFAH and modulating its activity. Also inhibits bacterial opsonization and killing by interacting with host complement regulator C4BPA and thus inhibiting classical complement pathway activation. The polypeptide is Serine-aspartate repeat-containing protein E (sdrE) (Staphylococcus aureus (strain N315)).